Consider the following 432-residue polypeptide: Enolase (432 aa).

Position 168 (Gln168) interacts with (2R)-2-phosphoglycerate. Glu210 serves as the catalytic Proton donor. The Mg(2+) site is built by Asp247, Glu288, and Asp315. (2R)-2-phosphoglycerate contacts are provided by Lys340, Arg369, Ser370, and Lys391. The Proton acceptor role is filled by Lys340.

It belongs to the enolase family. It depends on Mg(2+) as a cofactor.

The protein localises to the cytoplasm. The protein resides in the secreted. It is found in the cell surface. It carries out the reaction (2R)-2-phosphoglycerate = phosphoenolpyruvate + H2O. The protein operates within carbohydrate degradation; glycolysis; pyruvate from D-glyceraldehyde 3-phosphate: step 4/5. Catalyzes the reversible conversion of 2-phosphoglycerate (2-PG) into phosphoenolpyruvate (PEP). It is essential for the degradation of carbohydrates via glycolysis. The sequence is that of Enolase from Microcystis aeruginosa (strain NIES-843 / IAM M-2473).